The following is a 398-amino-acid chain: NADH-quinone oxidoreductase subunit D (398 aa).

Belongs to the complex I 49 kDa subunit family. NDH-1 is composed of 14 different subunits. Subunits NuoB, C, D, E, F, and G constitute the peripheral sector of the complex.

It is found in the cell inner membrane. It carries out the reaction a quinone + NADH + 5 H(+)(in) = a quinol + NAD(+) + 4 H(+)(out). NDH-1 shuttles electrons from NADH, via FMN and iron-sulfur (Fe-S) centers, to quinones in the respiratory chain. The immediate electron acceptor for the enzyme in this species is believed to be ubiquinone. Couples the redox reaction to proton translocation (for every two electrons transferred, four hydrogen ions are translocated across the cytoplasmic membrane), and thus conserves the redox energy in a proton gradient. This Anaplasma marginale (strain St. Maries) protein is NADH-quinone oxidoreductase subunit D.